A 145-amino-acid chain; its full sequence is Natriuretic peptides A (145 aa).

An N-terminal signal peptide occupies residues 1-23; that stretch reads MGTSFVGYLTFVLLLLALTKVRG. Residues 24–117 constitute a propeptide that is removed on maturation; that stretch reads GPAYNSPLSS…KLRELLNAPR (94 aa). An intrachain disulfide couples Cys125 to Cys141.

This sequence belongs to the natriuretic peptide family. In terms of processing, cleaved upon secretion to produce the functional hormone.

It is found in the secreted. Its function is as follows. Hormone playing a key role in cardiovascular homeostasis through regulation of natriuresis, diuresis, and vasodilation. Has a cGMP-stimulating activity. The chain is Natriuretic peptides A from Aquarana catesbeiana (American bullfrog).